The following is a 635-amino-acid chain: Early transcription factor 70 kDa subunit (635 aa).

One can recognise a Helicase ATP-binding domain in the interval 32–185 (RSILDENNSV…SNIISIMSDE (154 aa)). Position 45–52 (45–52 (HIMGSGKT)) interacts with ATP. The DEXH box signature appears at 135–138 (DEAH).

Belongs to the helicase family. VETF subfamily. In terms of assembly, heterodimer of a 70 kDa and a 82 kDa subunit. Part of the early transcription complex composed of ETF, RAP94, and the DNA-directed RNA polymerase.

The protein resides in the virion. Its function is as follows. Acts with RNA polymerase to initiate transcription from early gene promoters. Is recruited by the RPO-associated protein of 94 kDa (RAP94) to form the early transcription complex, which also contains the core RNA polymerase. ETF heterodimer binds to early gene promoters. The polypeptide is Early transcription factor 70 kDa subunit (VETFS) (Homo sapiens (Human)).